A 445-amino-acid chain; its full sequence is Succinate--CoA ligase [ADP-forming] subunit beta, mitochondrial (445 aa).

The transit peptide at 1 to 17 (MLSNIVKKTIQSSKNLK) directs the protein to the mitochondrion. The 228-residue stretch at 43–270 (QKMMKSYGIN…DNAAFRHPDI (228 aa)) folds into the ATP-grasp domain. Residues lysine 80 and 87-89 (GRG) contribute to the ATP site. The Mg(2+) site is built by asparagine 240 and aspartate 254. Residues asparagine 305 and 362-364 (GIM) each bind substrate.

This sequence belongs to the succinate/malate CoA ligase beta subunit family. ATP-specific subunit beta subfamily. As to quaternary structure, heterodimer of an alpha and a beta subunit. The beta subunit determines specificity for ATP. It depends on Mg(2+) as a cofactor.

It is found in the mitochondrion. It catalyses the reaction succinate + ATP + CoA = succinyl-CoA + ADP + phosphate. The protein operates within carbohydrate metabolism; tricarboxylic acid cycle; succinate from succinyl-CoA (ligase route): step 1/1. Functionally, ATP-specific succinyl-CoA synthetase functions in the citric acid cycle (TCA), coupling the hydrolysis of succinyl-CoA to the synthesis of ATP and thus represents the only step of substrate-level phosphorylation in the TCA. The beta subunit provides nucleotide specificity of the enzyme and binds the substrate succinate, while the binding sites for coenzyme A and phosphate are found in the alpha subunit. This Dictyostelium discoideum (Social amoeba) protein is Succinate--CoA ligase [ADP-forming] subunit beta, mitochondrial (scsC).